The chain runs to 469 residues: MSNIYIQEPPTNGKVLLKTTAGDIDIELWSKEAPKACRNFIQLCLEAYYDNTIFHRVVPGFIVQGGDPTGTGTGGESIYGAPFKDEFHSRLRFNRRGLVAMANAGPHDNGSQFFFTLGRADELNNKHTIFGKVTGDTVYNMLRLTEVDIDDEERPRNPHRIKSCEVLFNPFDDITPREIKKPKNEKPEEEVKKLKPKGTKNFSLLSFGEEAEEEEEEVNRVSQSMKGRSKSSHDLLKDDPHLSSVPAVESEKDDATGDLEDDGEDDSAERDEYMEDDEKNLMRERIAKRLKKDASASVKSAGDGEKKPASRSEELRKEARQLKRELLAAKQKKETAIKVEEGREEEEAAPDGAVAEYRREKQKYEALRKQQPKKGTSREDQTLALLSQFKSKLTQAITETPENSVPEAEVEDDEGWMSHVLQFEDKTRKVKDASMQDSDTFEIYDPRNPVNKRRREESKKLLREKKERR.

S2 carries the post-translational modification N-acetylserine. The region spanning T11 to V166 is the PPIase cyclophilin-type domain. Basic and acidic residues predominate over residues T175 to K193. 2 disordered regions span residues T175–G415 and R428–R469. Residues S206–S229 adopt a coiled-coil conformation. Residues S231–H241 show a composition bias toward basic and acidic residues. A compositionally biased stretch (acidic residues) spans T256–E278. 2 stretches are compositionally biased toward basic and acidic residues: residues G302–E341 and E356–R368. Residues A309–Q371 are a coiled coil. The segment covering A384–N403 has biased composition (polar residues). Residues R454–R469 show a composition bias toward basic and acidic residues.

The protein belongs to the cyclophilin-type PPIase family. In terms of assembly, part of the activated spliceosome B/catalytic step 1 spliceosome, one of the forms of the spliceosome which has a well-formed active site but still cannot catalyze the branching reaction and is composed at least of 52 proteins, the U2, U5 and U6 snRNAs and the pre-mRNA. Recruited during early steps of activated spliceosome B maturation, it is probably one of the first proteins released from this complex as he matures to the spliceosome C complex. Component of the minor spliceosome, which splices U12-type introns.

It is found in the nucleus. As part of the spliceosome, plays a role in pre-mRNA splicing. Probable inactive PPIase with no peptidyl-prolyl cis-trans isomerase activity. As a component of the minor spliceosome, involved in the splicing of U12-type introns in pre-mRNAs. In Mus musculus (Mouse), this protein is Spliceosome-associated protein CWC27 homolog.